Consider the following 429-residue polypeptide: UDP-N-acetylglucosamine 1-carboxyvinyltransferase (429 aa).

22 to 23 (KN) contacts phosphoenolpyruvate. A UDP-N-acetyl-alpha-D-glucosamine-binding site is contributed by Arg102. Cys126 serves as the catalytic Proton donor. Residue Cys126 is modified to 2-(S-cysteinyl)pyruvic acid O-phosphothioketal. UDP-N-acetyl-alpha-D-glucosamine-binding positions include 131–135 (RPVDL), Asp316, and Ile338.

Belongs to the EPSP synthase family. MurA subfamily.

The protein resides in the cytoplasm. The catalysed reaction is phosphoenolpyruvate + UDP-N-acetyl-alpha-D-glucosamine = UDP-N-acetyl-3-O-(1-carboxyvinyl)-alpha-D-glucosamine + phosphate. It functions in the pathway cell wall biogenesis; peptidoglycan biosynthesis. In terms of biological role, cell wall formation. Adds enolpyruvyl to UDP-N-acetylglucosamine. The polypeptide is UDP-N-acetylglucosamine 1-carboxyvinyltransferase (Rhodopseudomonas palustris (strain BisB5)).